Here is a 425-residue protein sequence, read N- to C-terminus: UDP-N-acetylglucosamine 1-carboxyvinyltransferase (425 aa).

22–23 contributes to the phosphoenolpyruvate binding site; the sequence is KN. R98 contributes to the UDP-N-acetyl-alpha-D-glucosamine binding site. The active-site Proton donor is the C122. At C122 the chain carries 2-(S-cysteinyl)pyruvic acid O-phosphothioketal. UDP-N-acetyl-alpha-D-glucosamine is bound by residues 127–131, D313, and I335; that span reads RPVDQ.

This sequence belongs to the EPSP synthase family. MurA subfamily.

The protein localises to the cytoplasm. It carries out the reaction phosphoenolpyruvate + UDP-N-acetyl-alpha-D-glucosamine = UDP-N-acetyl-3-O-(1-carboxyvinyl)-alpha-D-glucosamine + phosphate. It participates in cell wall biogenesis; peptidoglycan biosynthesis. Cell wall formation. Adds enolpyruvyl to UDP-N-acetylglucosamine. This Xylella fastidiosa (strain M12) protein is UDP-N-acetylglucosamine 1-carboxyvinyltransferase.